A 362-amino-acid polypeptide reads, in one-letter code: Chorismate synthase (362 aa).

Arg47 contacts NADP(+). FMN contacts are provided by residues 124 to 126, Gly286, 301 to 305, and Arg327; these read RSS and KPTAT.

It belongs to the chorismate synthase family. Homotetramer. The cofactor is FMNH2.

The catalysed reaction is 5-O-(1-carboxyvinyl)-3-phosphoshikimate = chorismate + phosphate. The protein operates within metabolic intermediate biosynthesis; chorismate biosynthesis; chorismate from D-erythrose 4-phosphate and phosphoenolpyruvate: step 7/7. In terms of biological role, catalyzes the anti-1,4-elimination of the C-3 phosphate and the C-6 proR hydrogen from 5-enolpyruvylshikimate-3-phosphate (EPSP) to yield chorismate, which is the branch point compound that serves as the starting substrate for the three terminal pathways of aromatic amino acid biosynthesis. This reaction introduces a second double bond into the aromatic ring system. This is Chorismate synthase from Gloeothece citriformis (strain PCC 7424) (Cyanothece sp. (strain PCC 7424)).